The primary structure comprises 160 residues: Small ribosomal subunit protein uS9 (160 aa).

It belongs to the universal ribosomal protein uS9 family.

The chain is Small ribosomal subunit protein uS9 from Mesorhizobium japonicum (strain LMG 29417 / CECT 9101 / MAFF 303099) (Mesorhizobium loti (strain MAFF 303099)).